The sequence spans 209 residues: uncharacterized protein (209 aa).

Residues 1-199 form the FCP1 homology domain; sequence MQVFLDLDET…DELKRVTASL (199 aa).

This is an uncharacterized protein from Dryophytes versicolor (chameleon treefrog).